A 133-amino-acid chain; its full sequence is Ribonuclease VapC28 (133 aa).

The region spanning 1-124 (MIVDTSAIIA…LWKGNDFGHT (124 aa)) is the PINc domain. Mg(2+)-binding residues include aspartate 4 and aspartate 100.

It belongs to the PINc/VapC protein family. It depends on Mg(2+) as a cofactor.

In terms of biological role, toxic component of a type II toxin-antitoxin (TA) system. An RNase. Upon expression in M.smegmatis inhibits colony formation. Its toxic effect is neutralized by coexpression with cognate antitoxin VapB28. This Mycobacterium tuberculosis (strain ATCC 25618 / H37Rv) protein is Ribonuclease VapC28.